The sequence spans 532 residues: Membrane protein insertase YidC (532 aa).

5 helical membrane passes run 7 to 27 (FFIF…QSQM), 336 to 356 (LTIL…ITFI), 413 to 433 (GGFL…YMLI), 450 to 470 (LSSQ…MFFI), and 492 to 512 (PVIF…YYII).

Belongs to the OXA1/ALB3/YidC family. Type 1 subfamily. In terms of assembly, interacts with the Sec translocase complex via SecD. Specifically interacts with transmembrane segments of nascent integral membrane proteins during membrane integration.

It localises to the cell membrane. Its function is as follows. Required for the insertion and/or proper folding and/or complex formation of integral membrane proteins into the membrane. Involved in integration of membrane proteins that insert both dependently and independently of the Sec translocase complex, as well as at least some lipoproteins. Aids folding of multispanning membrane proteins. The protein is Membrane protein insertase YidC of Buchnera aphidicola subsp. Acyrthosiphon pisum (strain 5A).